We begin with the raw amino-acid sequence, 128 residues long: Lymphocyte antigen 6D (128 aa).

Positions 1–20 (MRTALLLLAALAVATGPALT) are cleaved as a signal peptide. One can recognise a UPAR/Ly6 domain in the interval 21 to 108 (LRCHVCTSSS…AAPTRTALAH (88 aa)). Disulfide bonds link C23-C45, C26-C32, C38-C63, C67-C86, and C87-C92. N98 carries the GPI-anchor amidated asparagine lipid modification. Positions 99–128 (AAPTRTALAHSALSLGLALSLLAVILAPSL) are cleaved as a propeptide — removed in mature form.

In terms of tissue distribution, expressed exclusively at the outer cell surface of transitional epithelia and the keratinocyte of stratified squamous epithelia.

Its subcellular location is the cell membrane. In terms of biological role, may act as a specification marker at earliest stage specification of lymphocytes between B- and T-cell development. Marks the earliest stage of B-cell specification. This is Lymphocyte antigen 6D (LY6D) from Homo sapiens (Human).